The sequence spans 188 residues: Large ribosomal subunit protein uL5 (188 aa).

The protein belongs to the universal ribosomal protein uL5 family. Part of the 50S ribosomal subunit; part of the 5S rRNA/L5/L18/L25 subcomplex. Contacts the 5S rRNA and the P site tRNA. Forms a bridge to the 30S subunit in the 70S ribosome.

Functionally, this is one of the proteins that bind and probably mediate the attachment of the 5S RNA into the large ribosomal subunit, where it forms part of the central protuberance. In the 70S ribosome it contacts protein S13 of the 30S subunit (bridge B1b), connecting the 2 subunits; this bridge is implicated in subunit movement. Contacts the P site tRNA; the 5S rRNA and some of its associated proteins might help stabilize positioning of ribosome-bound tRNAs. This Aquifex aeolicus (strain VF5) protein is Large ribosomal subunit protein uL5.